We begin with the raw amino-acid sequence, 1147 residues long: ATP-dependent helicase/deoxyribonuclease subunit B (1147 aa).

An ATP-binding site is contributed by 8 to 15; it reads GRAGSGKS. [4Fe-4S] cluster is bound by residues C786, C1106, C1109, and C1115.

This sequence belongs to the helicase family. AddB/RexB type 1 subfamily. As to quaternary structure, heterodimer of AddA and AddB. The cofactor is Mg(2+). It depends on [4Fe-4S] cluster as a cofactor.

In terms of biological role, the heterodimer acts as both an ATP-dependent DNA helicase and an ATP-dependent, dual-direction single-stranded exonuclease. Recognizes the chi site generating a DNA molecule suitable for the initiation of homologous recombination. The AddB subunit has 5' -&gt; 3' nuclease activity but not helicase activity. This Clostridium botulinum (strain Loch Maree / Type A3) protein is ATP-dependent helicase/deoxyribonuclease subunit B.